The primary structure comprises 531 residues: Ribosomal protein uS12 methylthiotransferase RimO (531 aa).

Composition is skewed to polar residues over residues 1 to 19 and 55 to 67; these read MPNI…SQPA and HNQN…SSEV. A disordered region spans residues 1–77; sequence MPNISTESVN…VSAASAKTTT (77 aa). Residues 68–77 are compositionally biased toward low complexity; that stretch reads VSAASAKTTT. The MTTase N-terminal domain occupies 88 to 198; the sequence is PKIGFVSLGC…VIRAVALHVP (111 aa). Cys-97, Cys-133, Cys-162, Cys-236, Cys-240, and Cys-243 together coordinate [4Fe-4S] cluster. A Radical SAM core domain is found at 222–459; that stretch reads LTPSHYAYLK…MTLQQDISAQ (238 aa). Residues 462–531 form the TRAM domain; it reads QEKIGKTLMV…EYDLFASYKG (70 aa).

It belongs to the methylthiotransferase family. RimO subfamily. Requires [4Fe-4S] cluster as cofactor.

The protein resides in the cytoplasm. The catalysed reaction is L-aspartate(89)-[ribosomal protein uS12]-hydrogen + (sulfur carrier)-SH + AH2 + 2 S-adenosyl-L-methionine = 3-methylsulfanyl-L-aspartate(89)-[ribosomal protein uS12]-hydrogen + (sulfur carrier)-H + 5'-deoxyadenosine + L-methionine + A + S-adenosyl-L-homocysteine + 2 H(+). Functionally, catalyzes the methylthiolation of an aspartic acid residue of ribosomal protein uS12. This chain is Ribosomal protein uS12 methylthiotransferase RimO, found in Psychrobacter cryohalolentis (strain ATCC BAA-1226 / DSM 17306 / VKM B-2378 / K5).